Consider the following 457-residue polypeptide: Phosphomethylpyrimidine synthase (457 aa).

Substrate-binding positions include Asn-80, Met-109, Tyr-139, His-175, 195 to 197, 236 to 239, and Glu-275; these read SRG and DSLR. His-279 provides a ligand contact to Zn(2+). Residue Tyr-302 coordinates substrate. Residue His-343 participates in Zn(2+) binding. [4Fe-4S] cluster-binding residues include Cys-423, Cys-426, and Cys-431.

The protein belongs to the ThiC family. Requires [4Fe-4S] cluster as cofactor.

It carries out the reaction 5-amino-1-(5-phospho-beta-D-ribosyl)imidazole + S-adenosyl-L-methionine = 4-amino-2-methyl-5-(phosphooxymethyl)pyrimidine + CO + 5'-deoxyadenosine + formate + L-methionine + 3 H(+). It functions in the pathway cofactor biosynthesis; thiamine diphosphate biosynthesis. In terms of biological role, catalyzes the synthesis of the hydroxymethylpyrimidine phosphate (HMP-P) moiety of thiamine from aminoimidazole ribotide (AIR) in a radical S-adenosyl-L-methionine (SAM)-dependent reaction. The protein is Phosphomethylpyrimidine synthase of Trichormus variabilis (strain ATCC 29413 / PCC 7937) (Anabaena variabilis).